Consider the following 362-residue polypeptide: Chorismate synthase (362 aa).

Arginine 47 is a binding site for NADP(+). FMN is bound by residues 124 to 126 (RSS), glycine 286, 301 to 305 (KPTAT), and arginine 327.

Belongs to the chorismate synthase family. Homotetramer. Requires FMNH2 as cofactor.

It carries out the reaction 5-O-(1-carboxyvinyl)-3-phosphoshikimate = chorismate + phosphate. The protein operates within metabolic intermediate biosynthesis; chorismate biosynthesis; chorismate from D-erythrose 4-phosphate and phosphoenolpyruvate: step 7/7. In terms of biological role, catalyzes the anti-1,4-elimination of the C-3 phosphate and the C-6 proR hydrogen from 5-enolpyruvylshikimate-3-phosphate (EPSP) to yield chorismate, which is the branch point compound that serves as the starting substrate for the three terminal pathways of aromatic amino acid biosynthesis. This reaction introduces a second double bond into the aromatic ring system. The chain is Chorismate synthase from Synechocystis sp. (strain ATCC 27184 / PCC 6803 / Kazusa).